The following is a 557-amino-acid chain: Dihydroxy-acid dehydratase (557 aa).

Position 50 (Cys-50) interacts with [2Fe-2S] cluster. Asp-82 serves as a coordination point for Mg(2+). [2Fe-2S] cluster is bound at residue Cys-123. Mg(2+)-binding residues include Asp-124 and Lys-125. N6-carboxylysine is present on Lys-125. Position 195 (Cys-195) interacts with [2Fe-2S] cluster. Glu-447 lines the Mg(2+) pocket. Catalysis depends on Ser-473, which acts as the Proton acceptor.

It belongs to the IlvD/Edd family. Homodimer. Requires [2Fe-2S] cluster as cofactor. The cofactor is Mg(2+).

It carries out the reaction (2R)-2,3-dihydroxy-3-methylbutanoate = 3-methyl-2-oxobutanoate + H2O. It catalyses the reaction (2R,3R)-2,3-dihydroxy-3-methylpentanoate = (S)-3-methyl-2-oxopentanoate + H2O. The protein operates within amino-acid biosynthesis; L-isoleucine biosynthesis; L-isoleucine from 2-oxobutanoate: step 3/4. Its pathway is amino-acid biosynthesis; L-valine biosynthesis; L-valine from pyruvate: step 3/4. Functionally, functions in the biosynthesis of branched-chain amino acids. Catalyzes the dehydration of (2R,3R)-2,3-dihydroxy-3-methylpentanoate (2,3-dihydroxy-3-methylvalerate) into 2-oxo-3-methylpentanoate (2-oxo-3-methylvalerate) and of (2R)-2,3-dihydroxy-3-methylbutanoate (2,3-dihydroxyisovalerate) into 2-oxo-3-methylbutanoate (2-oxoisovalerate), the penultimate precursor to L-isoleucine and L-valine, respectively. The protein is Dihydroxy-acid dehydratase of Herminiimonas arsenicoxydans.